Reading from the N-terminus, the 119-residue chain is uncharacterized protein (119 aa).

An N-terminal signal peptide occupies residues Met-1 to Gly-18. A disordered region spans residues Pro-23 to Ala-100. Polar residues predominate over residues Gly-43 to Gln-71. N-linked (GlcNAc...) asparagine glycosylation is present at Asn-44.

It is found in the secreted. This is an uncharacterized protein from Homo sapiens (Human).